The chain runs to 459 residues: Exodeoxyribonuclease 7 large subunit (459 aa).

It belongs to the XseA family. As to quaternary structure, heterooligomer composed of large and small subunits.

The protein localises to the cytoplasm. The catalysed reaction is Exonucleolytic cleavage in either 5'- to 3'- or 3'- to 5'-direction to yield nucleoside 5'-phosphates.. In terms of biological role, bidirectionally degrades single-stranded DNA into large acid-insoluble oligonucleotides, which are then degraded further into small acid-soluble oligonucleotides. The chain is Exodeoxyribonuclease 7 large subunit from Yersinia pseudotuberculosis serotype IB (strain PB1/+).